The primary structure comprises 164 residues: ATP synthase B' chain, cyanelle (164 aa).

A helical transmembrane segment spans residues 26–46; that stretch reads ATLPVMMVQLLVLMLILNAVF.

The protein belongs to the ATPase B chain family. As to quaternary structure, F-type ATPases have 2 components, F(1) - the catalytic core - and F(0) - the membrane proton channel. F(1) has five subunits: alpha(3), beta(3), gamma(1), delta(1), epsilon(1). F(0) has four main subunits: a(1), b(1), b'(1) and c(10-14). The alpha and beta chains form an alternating ring which encloses part of the gamma chain. F(1) is attached to F(0) by a central stalk formed by the gamma and epsilon chains, while a peripheral stalk is formed by the delta, b and b' chains.

The protein localises to the plastid. It is found in the cyanelle thylakoid membrane. F(1)F(0) ATP synthase produces ATP from ADP in the presence of a proton or sodium gradient. F-type ATPases consist of two structural domains, F(1) containing the extramembraneous catalytic core and F(0) containing the membrane proton channel, linked together by a central stalk and a peripheral stalk. During catalysis, ATP synthesis in the catalytic domain of F(1) is coupled via a rotary mechanism of the central stalk subunits to proton translocation. Functionally, component of the F(0) channel, it forms part of the peripheral stalk, linking F(1) to F(0). The b'-subunit is a diverged and duplicated form of b found in plants and photosynthetic bacteria. In Cyanophora paradoxa, this protein is ATP synthase B' chain, cyanelle.